Reading from the N-terminus, the 315-residue chain is HVA22-like protein h (315 aa).

Positions Pro148 to Arg315 are disordered. Positions Ala173–Lys190 are enriched in polar residues. A compositionally biased stretch (pro residues) spans Pro234 to Pro248.

It belongs to the DP1 family.

The sequence is that of HVA22-like protein h (HVA22H) from Arabidopsis thaliana (Mouse-ear cress).